The sequence spans 93 residues: MANKKIDHREEAVELLKQDAKRILQLIKVQMDNLTLPQCPAYEEVLDTQMYGLSREINFATRLGLIEPEEGKKLMSTLEKELSTLHELSMSKK.

It belongs to the UPF0358 family.

The sequence is that of UPF0358 protein lmo1070 from Listeria monocytogenes serovar 1/2a (strain ATCC BAA-679 / EGD-e).